We begin with the raw amino-acid sequence, 172 residues long: MNRQGKSVEISELSKIFSSSGSIVVAHYKGISVAQIKDLRKKMREAGGGVKVAKNRLVKIAIRDTSIRGISDLFVGQSLIVYSDSPVIAPKISVSFSNDNNEFRVLGGVVEKGVLNQDSIKQIASLPDLEGIRAGIISAIQSNATRLVRLLGTPQTQVVRAISAFVDKNQQG.

Belongs to the universal ribosomal protein uL10 family. As to quaternary structure, part of the ribosomal stalk of the 50S ribosomal subunit. The N-terminus interacts with L11 and the large rRNA to form the base of the stalk. The C-terminus forms an elongated spine to which L12 dimers bind in a sequential fashion forming a multimeric L10(L12)X complex.

In terms of biological role, forms part of the ribosomal stalk, playing a central role in the interaction of the ribosome with GTP-bound translation factors. The protein is Large ribosomal subunit protein uL10 (rplJ) of Liberibacter asiaticus (Citrus greening disease).